The primary structure comprises 337 residues: Lipoyl synthase (337 aa).

[4Fe-4S] cluster-binding residues include Cys-81, Cys-86, Cys-92, Cys-107, Cys-111, Cys-114, and Ser-323. The 220-residue stretch at 93–312 (FSHGTATFMI…EEYGNALGFS (220 aa)) folds into the Radical SAM core domain.

Belongs to the radical SAM superfamily. Lipoyl synthase family. [4Fe-4S] cluster serves as cofactor.

It is found in the cytoplasm. The catalysed reaction is [[Fe-S] cluster scaffold protein carrying a second [4Fe-4S](2+) cluster] + N(6)-octanoyl-L-lysyl-[protein] + 2 oxidized [2Fe-2S]-[ferredoxin] + 2 S-adenosyl-L-methionine + 4 H(+) = [[Fe-S] cluster scaffold protein] + N(6)-[(R)-dihydrolipoyl]-L-lysyl-[protein] + 4 Fe(3+) + 2 hydrogen sulfide + 2 5'-deoxyadenosine + 2 L-methionine + 2 reduced [2Fe-2S]-[ferredoxin]. The protein operates within protein modification; protein lipoylation via endogenous pathway; protein N(6)-(lipoyl)lysine from octanoyl-[acyl-carrier-protein]: step 2/2. Catalyzes the radical-mediated insertion of two sulfur atoms into the C-6 and C-8 positions of the octanoyl moiety bound to the lipoyl domains of lipoate-dependent enzymes, thereby converting the octanoylated domains into lipoylated derivatives. This is Lipoyl synthase from Xanthomonas oryzae pv. oryzae (strain MAFF 311018).